The primary structure comprises 802 residues: ATP-dependent zinc metalloprotease FTSH 7, chloroplastic (802 aa).

A chloroplast-targeting transit peptide spans 1 to 55 (MTTTFEFLQPRIHGFATCCSSNSLLYSKASRFFNDRCRVYRQNPNRFVSNSITLP). The segment at 87-117 (CQEDDQNESSSEEEESSQSTPAKSERKREKK) is disordered. Over residues 88-102 (QEDDQNESSSEEEES) the composition is skewed to acidic residues. A run of 2 helical transmembrane segments spans residues 134 to 154 (IIQA…MFVM) and 268 to 288 (GGFF…AGLI). 365-372 (GLPGTGKT) provides a ligand contact to ATP. A Zn(2+)-binding site is contributed by histidine 590. Glutamate 591 is a catalytic residue. Zn(2+)-binding residues include histidine 594 and aspartate 673.

In the N-terminal section; belongs to the AAA ATPase family. This sequence in the C-terminal section; belongs to the peptidase M41 family. Zn(2+) is required as a cofactor.

It is found in the plastid. The protein resides in the chloroplast thylakoid membrane. Functionally, probable ATP-dependent zinc metallopeptidase. The sequence is that of ATP-dependent zinc metalloprotease FTSH 7, chloroplastic (FTSH7) from Arabidopsis thaliana (Mouse-ear cress).